Consider the following 115-residue polypeptide: NAD(P)H-quinone oxidoreductase subunit M (115 aa).

Belongs to the complex I NdhM subunit family. In terms of assembly, NDH-1 can be composed of about 15 different subunits; different subcomplexes with different compositions have been identified which probably have different functions.

It is found in the cellular thylakoid membrane. It catalyses the reaction a plastoquinone + NADH + (n+1) H(+)(in) = a plastoquinol + NAD(+) + n H(+)(out). The enzyme catalyses a plastoquinone + NADPH + (n+1) H(+)(in) = a plastoquinol + NADP(+) + n H(+)(out). In terms of biological role, NDH-1 shuttles electrons from an unknown electron donor, via FMN and iron-sulfur (Fe-S) centers, to quinones in the respiratory and/or the photosynthetic chain. The immediate electron acceptor for the enzyme in this species is believed to be plastoquinone. Couples the redox reaction to proton translocation, and thus conserves the redox energy in a proton gradient. Cyanobacterial NDH-1 also plays a role in inorganic carbon-concentration. The chain is NAD(P)H-quinone oxidoreductase subunit M from Trichodesmium erythraeum (strain IMS101).